The sequence spans 456 residues: MHLRIHARRNPPRRPAWTLGIWSLFWGCIVSSVWSSSNVASSSSSPGSHSQHEHHFHGSKHHSVPISIYRSPVSLRGGHAGATYIFGKSGGLILYTWPANDRPSTRSDRLAVGFSTTVKDGILVRIDSAPGLGDFLQLHIEQGKIGVVFNIGTVDISIKEERTPVNDGKYHVVRFTRNGGNATLQVDNWPVNEHYPTGNTDNERFQMVKQKIPFKYNRPVEEWLQEKGRQLTIFNTQAQIAIGGKDKGRLFQGQLSGLYYDGLKVLNMAAENNPNIKINGSVRLVGEVPSILGTTQTTSMPPEMSTTVMETTTTMATTTTRKNRSTASIQPTSDDLVSSAECSSDDEDFVECEPSTANPTEPGVRRVPGASEVIRESSSTTGMVVGIVAAAALCILILLYAMYKYRNRDEGSYQVDETRNYISNSAQSNGTLLKEKPPSSKGGHKKQKNKDKEYYV.

The N-terminal stretch at 1–35 (MHLRIHARRNPPRRPAWTLGIWSLFWGCIVSSVWS) is a signal peptide. Residues 36–381 (SSNVASSSSS…EVIRESSSTT (346 aa)) lie on the Extracellular side of the membrane. The disordered stretch occupies residues 41–63 (SSSSSPGSHSQHEHHFHGSKHHS). A compositionally biased stretch (basic residues) spans 52–63 (HEHHFHGSKHHS). Positions 82–282 (ATYIFGKSGG…NPNIKINGSV (201 aa)) constitute a Laminin G-like domain. Ca(2+) contacts are provided by D134 and I151. N181 carries N-linked (GlcNAc...) asparagine glycosylation. Ca(2+)-binding residues include I233 and N235. 2 N-linked (GlcNAc...) asparagine glycosylation sites follow: N279 and N323. Positions 316-340 (ATTTTRKNRSTASIQPTSDDLVSSA) are disordered. Polar residues predominate over residues 325-340 (STASIQPTSDDLVSSA). An O-linked (Xyl...) (heparan sulfate) serine glycan is attached at S339. The helical transmembrane segment at 382–402 (GMVVGIVAAAALCILILLYAM) threads the bilayer. The Cytoplasmic segment spans residues 403–456 (YKYRNRDEGSYQVDETRNYISNSAQSNGTLLKEKPPSSKGGHKKQKNKDKEYYV). The interval 424–456 (NSAQSNGTLLKEKPPSSKGGHKKQKNKDKEYYV) is disordered.

This sequence belongs to the neurexin family. Weakly interacts with CBLN1 and CBLN2. Very weak binding, if any, to CBLN4. Specific isoforms bind neuroligins NLGN1, NLGN2 and NLGN3. Interacts with CLSTN3. Processed by alpha-secretase leading to the formation of an extracellular soluble protein as well as a C-terminal membrane-embedded fragment (CTF). Proteolysis of these CTFs by gamma-secretase releases intracellular domains (ICDs) and extracellular peptides. In terms of processing, O-glycosylated; contains heparan sulfate. Heparan sulfate attachment is required for synapse development by mediating interactions with neuroligins.

The protein resides in the presynaptic cell membrane. It is found in the secreted. Neuronal cell surface protein that may be involved in cell recognition and cell adhesion. May mediate intracellular signaling. Functions as part of a trans-synaptic complex by binding to cerebellins and postsynaptic GRID1. This interaction helps regulate the activity of NMDA and AMPA receptors at hippocampal synapses without affecting synapse formation. NRXN3B-CBLN2-GRID1 complex transduce presynaptic signals into postsynaptic AMPAR response. This chain is Neurexin-3-beta (NRXN3), found in Bos taurus (Bovine).